The chain runs to 58 residues: 6.8 kDa protein (58 aa).

The polypeptide is 6.8 kDa protein (Satellite tobacco mosaic virus (STMV)).